Consider the following 464-residue polypeptide: Divalent metal cation transporter MntH (464 aa).

11 helical membrane-spanning segments follow: residues 57-77, 82-102, 125-145, 157-177, 186-206, 229-249, 281-301, 321-341, 376-396, 399-419, and 443-463; these read ILIA…AGGA, SLLS…SMAA, GIIL…AEII, IPLV…LLLM, AIVA…VFLA, MLYL…LYLG, LTIA…LFFG, IVGA…LLSS, LLSV…EAKI, LLTL…VPLV, and VATV…VGVI.

The protein belongs to the NRAMP family.

It localises to the cell membrane. H(+)-stimulated, divalent metal cation uptake system. The protein is Divalent metal cation transporter MntH of Levilactobacillus brevis (Lactobacillus brevis).